The sequence spans 239 residues: Ribonuclease PH (239 aa).

Residues Arg-86 and 124–126 (GTR) each bind phosphate.

Belongs to the RNase PH family. As to quaternary structure, homohexameric ring arranged as a trimer of dimers.

The enzyme catalyses tRNA(n+1) + phosphate = tRNA(n) + a ribonucleoside 5'-diphosphate. In terms of biological role, phosphorolytic 3'-5' exoribonuclease that plays an important role in tRNA 3'-end maturation. Removes nucleotide residues following the 3'-CCA terminus of tRNAs; can also add nucleotides to the ends of RNA molecules by using nucleoside diphosphates as substrates, but this may not be physiologically important. Probably plays a role in initiation of 16S rRNA degradation (leading to ribosome degradation) during starvation. This Rickettsia bellii (strain RML369-C) protein is Ribonuclease PH.